The following is a 569-amino-acid chain: Proline--tRNA ligase (569 aa).

Belongs to the class-II aminoacyl-tRNA synthetase family. ProS type 1 subfamily. As to quaternary structure, homodimer.

The protein resides in the cytoplasm. It catalyses the reaction tRNA(Pro) + L-proline + ATP = L-prolyl-tRNA(Pro) + AMP + diphosphate. Functionally, catalyzes the attachment of proline to tRNA(Pro) in a two-step reaction: proline is first activated by ATP to form Pro-AMP and then transferred to the acceptor end of tRNA(Pro). As ProRS can inadvertently accommodate and process non-cognate amino acids such as alanine and cysteine, to avoid such errors it has two additional distinct editing activities against alanine. One activity is designated as 'pretransfer' editing and involves the tRNA(Pro)-independent hydrolysis of activated Ala-AMP. The other activity is designated 'posttransfer' editing and involves deacylation of mischarged Ala-tRNA(Pro). The misacylated Cys-tRNA(Pro) is not edited by ProRS. The sequence is that of Proline--tRNA ligase from Nitratiruptor sp. (strain SB155-2).